A 419-amino-acid chain; its full sequence is UPF0229 protein TERTU_3150 (419 aa).

Residues 63 to 111 are disordered; that stretch reads IFHHGSGGKNNRVLPGNDRFNGGDHIERPEQGQGGGGNGSGASDSGEGE. Positions 83–92 are enriched in basic and acidic residues; sequence NGGDHIERPE.

It belongs to the UPF0229 family.

The sequence is that of UPF0229 protein TERTU_3150 from Teredinibacter turnerae (strain ATCC 39867 / T7901).